Consider the following 893-residue polypeptide: Pentatricopeptide repeat-containing protein At5g52850, chloroplastic (893 aa).

PPR repeat units follow at residues 57–87 (NLDLCNNLLSLYLKTDGIWNARKLFDEMSHR), 88–122 (TVFAWTVMISAFTKSQEFASALSLFEEMMASGTHP), 123–157 (NEFTFSSVVRSCAGLRDISYGGRVHGSVIKTGFEG), 158–188 (NSVVGSSLSDLYSKCGQFKEACELFSSLQNA), 189–223 (DTISWTMMISSLVGARKWREALQFYSEMVKAGVPP), 224–257 (NEFTFVKLLGASSFLGLEFGKTIHSNIIVRGIPL), 258–288 (NVVLKTSLVDFYSQFSKMEDAVRVLNSSGEQ), 289–323 (DVFLWTSVVSGFVRNLRAKEAVGTFLEMRSLGLQP), 324–358 (NNFTYSAILSLCSAVRSLDFGKQIHSQTIKVGFED), 359–390 (STDVGNALVDMYMKCSASEVEASRVFGAMVSP), 391–425 (NVVSWTTLILGLVDHGFVQDCFGLLMEMVKREVEP), 426–460 (NVVTLSGVLRACSKLRHVRRVLEIHAYLLRRHVDG), 461–491 (EMVVGNSLVDAYASSRKVDYAWNVIRSMKRR), 492–526 (DNITYTSLVTRFNELGKHEMALSVINYMYGDGIRM), 527–561 (DQLSLPGFISASANLGALETGKHLHCYSVKSGFSG), 562–592 (AASVLNSLVDMYSKCGSLEDAKKVFEEIATP), 593–627 (DVVSWNGLVSGLASNGFISSALSAFEEMRMKETEP), 628–658 (DSVTFLILLSACSNGRLTDLGLEYFQVMKKI), and 664–694 (QVEHYVHLVGILGRAGRLEEATGVVETMHLK). The segment at 699 to 774 (IFKTLLRACR…KLGKSTVEVQ (76 aa)) is type E motif. The segment at 775–806 (GKVHSFVSEDVTRVDKTNGIYAEIESIKEEIK) is type E(+) motif. Residues 807 to 893 (RFGSPYRGNE…SCKREETSFV (87 aa)) form a type DYW motif region.

It belongs to the PPR family. PCMP-H subfamily.

It is found in the plastid. The protein localises to the chloroplast. The chain is Pentatricopeptide repeat-containing protein At5g52850, chloroplastic (PCMP-H31) from Arabidopsis thaliana (Mouse-ear cress).